We begin with the raw amino-acid sequence, 314 residues long: UDP-3-O-acyl-N-acetylglucosamine deacetylase (314 aa).

Positions 82, 239, and 243 each coordinate Zn(2+). H266 (proton donor) is an active-site residue.

Belongs to the LpxC family. Zn(2+) is required as a cofactor.

The enzyme catalyses a UDP-3-O-[(3R)-3-hydroxyacyl]-N-acetyl-alpha-D-glucosamine + H2O = a UDP-3-O-[(3R)-3-hydroxyacyl]-alpha-D-glucosamine + acetate. It functions in the pathway glycolipid biosynthesis; lipid IV(A) biosynthesis; lipid IV(A) from (3R)-3-hydroxytetradecanoyl-[acyl-carrier-protein] and UDP-N-acetyl-alpha-D-glucosamine: step 2/6. In terms of biological role, catalyzes the hydrolysis of UDP-3-O-myristoyl-N-acetylglucosamine to form UDP-3-O-myristoylglucosamine and acetate, the committed step in lipid A biosynthesis. The chain is UDP-3-O-acyl-N-acetylglucosamine deacetylase from Myxococcus xanthus (strain DK1622).